We begin with the raw amino-acid sequence, 396 residues long: MNKSYENSGRFGRFGGQYVPETVMTALMELEESFNKAKEDSKFIDEYMYYLQEYSGRPTPLYYAENLTKNLGGAKIYLKREDLNHTGAHKINNVLGQILLAKRMGKKKVIAETGAGQHGVAVATGAAMFQMECVIYMGEEDCRRQSLNVLRMKILGAKVVSVESGTKTLKDAVNEALRKWVENIEDTFYVMGSVVGPHPYPTMVRDFQRIIGDETKEQILKKEGKLPNYIIACVGGGSNSMGIFYPFVEDKSVKLIGVEAAGLGVDTDKHAASMAKGSVGVLHGMMTYLIQDDEGQILPVYSVSAGLDYPGVGPEHAYLKDTKRAEYTYVTDQEALDAFGYLSRCEGIIPALESSHALAYTMKLAPELSKEEIVVVNISGRGDKDVDTISELNIFG.

An N6-(pyridoxal phosphate)lysine modification is found at K90.

Belongs to the TrpB family. Tetramer of two alpha and two beta chains. It depends on pyridoxal 5'-phosphate as a cofactor.

It catalyses the reaction (1S,2R)-1-C-(indol-3-yl)glycerol 3-phosphate + L-serine = D-glyceraldehyde 3-phosphate + L-tryptophan + H2O. The protein operates within amino-acid biosynthesis; L-tryptophan biosynthesis; L-tryptophan from chorismate: step 5/5. Its function is as follows. The beta subunit is responsible for the synthesis of L-tryptophan from indole and L-serine. The polypeptide is Tryptophan synthase beta chain (Clostridium kluyveri (strain NBRC 12016)).